Here is an 80-residue protein sequence, read N- to C-terminus: GDVCQDCIQMVTDLQNAVRTNSTFVEALVNHAKEECDRLGPGMADMCKNYISQYSEIAIQMMMHMQPKDICGLVGFCEEV.

The 80-residue stretch at Gly-1 to Val-80 folds into the Saposin B-type domain. 3 disulfide bridges follow: Cys-4-Cys-77, Cys-7-Cys-71, and Cys-36-Cys-47. Asn-21 is a glycosylation site (N-linked (GlcNAc...) (complex) asparagine).

In terms of assembly, saposin-B is a homodimer. Interacts with GRN; facilitates lysosomal delivery of progranulin from the extracellular space and the biosynthetic pathway. Post-translationally, the one residue extended Saposin-B-Val is only found in a minority of the chains.

Its function is as follows. Saposin-B stimulates the hydrolysis of galacto-cerebroside sulfate by arylsulfatase A (EC 3.1.6.8), GM1 gangliosides by beta-galactosidase (EC 3.2.1.23) and globotriaosylceramide by alpha-galactosidase A (EC 3.2.1.22). Saposin-B forms a solubilizing complex with the substrates of the sphingolipid hydrolases. The chain is Saposin-B-Val (PSAP) from Sus scrofa (Pig).